A 367-amino-acid polypeptide reads, in one-letter code: Phosphoribosylaminoimidazole-succinocarboxamide synthase (367 aa).

The protein belongs to the SAICAR synthetase family.

The catalysed reaction is 5-amino-1-(5-phospho-D-ribosyl)imidazole-4-carboxylate + L-aspartate + ATP = (2S)-2-[5-amino-1-(5-phospho-beta-D-ribosyl)imidazole-4-carboxamido]succinate + ADP + phosphate + 2 H(+). The protein operates within purine metabolism; IMP biosynthesis via de novo pathway; 5-amino-1-(5-phospho-D-ribosyl)imidazole-4-carboxamide from 5-amino-1-(5-phospho-D-ribosyl)imidazole-4-carboxylate: step 1/2. The sequence is that of Phosphoribosylaminoimidazole-succinocarboxamide synthase from Aeromonas salmonicida (strain A449).